The chain runs to 158 residues: C-type lectin lectoxin-Enh7 (158 aa).

Positions 1–23 (MGQFTVVSLGLLAVFLSLSGAKG) are cleaved as a signal peptide. 3 cysteine pairs are disulfide-bonded: C26-C37, C54-C154, and C129-C146. The C-type lectin domain maps to 33 to 155 (RNGVCNKLFP…CASLHPFICQ (123 aa)). Residues 119 to 121 (EPN) carry the Mannose-binding motif. 3 residues coordinate Ca(2+): E127, N142, and D143.

This sequence belongs to the true venom lectin family. Expressed by the venom gland.

The protein resides in the secreted. Its function is as follows. Mannose-binding lectin which recognizes specific carbohydrate structures and agglutinates a variety of animal cells by binding to cell-surface glycoproteins and glycolipids. May be a calcium-dependent lectin. The sequence is that of C-type lectin lectoxin-Enh7 from Pseudoferania polylepis (Macleay's water snake).